A 99-amino-acid chain; its full sequence is CLAVATA3/ESR (CLE)-related protein 41 (99 aa).

The first 34 residues, 1-34 (MATSNDQTNTKSSHSRTLLLLFIFLSLLLFSSLT), serve as a signal peptide directing secretion. The interval 60 to 99 (ASSTMDLRPKASTRRSRTSRRREFGNDAHEVPSGPNPISN) is disordered. Basic residues predominate over residues 70–79 (ASTRRSRTSR). Positions 80–89 (RREFGNDAHE) are enriched in basic and acidic residues. A hydroxyproline mark is found at proline 91 and proline 94. The O-linked (Ara...) hydroxyproline glycan is linked to proline 94.

This sequence belongs to the CLV3/ESR signal peptide family. In terms of assembly, CLE41p interacts specifically with the leucine-rich repeat receptor-like protein kinase TDR. The O-glycosylation (arabinosylation) of the hydroxyproline Pro-94 enhances binding affinity of the CLE41p peptide for its receptor. Mostly expressed in inflorescence and roots, and, to a lower extent, in seedlings, flowers, leaves and siliques. Observed along the vascular strands in cotyledons, leaves and roots, but not in shoot apical meristems (SAM). Restricted to the phloem and the neighboring pericycle cells in the roots and hypocotyls.

The protein localises to the secreted. It is found in the extracellular space. Functionally, extracellular signal peptide that regulates cell fate. May act with TDR as a ligand-receptor pair in a signal transduction pathway that represses tracheary element differentiation but promotes the formation of procambial cells adjacent to phloem cells in the veins in an auxin-dependent manner. Regulates the transition of protophloem cells from proliferation to differentiation, thus impinging on postembryonic growth capacity of the root meristem; this signaling pathway requires CRN and CLV2. The sequence is that of CLAVATA3/ESR (CLE)-related protein 41 from Arabidopsis thaliana (Mouse-ear cress).